The primary structure comprises 452 residues: UDP-N-acetylmuramoylalanine--D-glutamate ligase (452 aa).

119–125 (GSNGKTT) contacts ATP.

This sequence belongs to the MurCDEF family.

The protein localises to the cytoplasm. The enzyme catalyses UDP-N-acetyl-alpha-D-muramoyl-L-alanine + D-glutamate + ATP = UDP-N-acetyl-alpha-D-muramoyl-L-alanyl-D-glutamate + ADP + phosphate + H(+). It functions in the pathway cell wall biogenesis; peptidoglycan biosynthesis. Cell wall formation. Catalyzes the addition of glutamate to the nucleotide precursor UDP-N-acetylmuramoyl-L-alanine (UMA). This Streptococcus pyogenes serotype M28 (strain MGAS6180) protein is UDP-N-acetylmuramoylalanine--D-glutamate ligase.